The primary structure comprises 385 residues: Methylthioribose-1-phosphate isomerase (385 aa).

Asp-256 acts as the Proton donor in catalysis.

It belongs to the eIF-2B alpha/beta/delta subunits family. MtnA subfamily.

It is found in the cytoplasm. The protein localises to the nucleus. It carries out the reaction 5-(methylsulfanyl)-alpha-D-ribose 1-phosphate = 5-(methylsulfanyl)-D-ribulose 1-phosphate. Its pathway is amino-acid biosynthesis; L-methionine biosynthesis via salvage pathway; L-methionine from S-methyl-5-thio-alpha-D-ribose 1-phosphate: step 1/6. Its function is as follows. Catalyzes the interconversion of methylthioribose-1-phosphate (MTR-1-P) into methylthioribulose-1-phosphate (MTRu-1-P). This Arthroderma otae (strain ATCC MYA-4605 / CBS 113480) (Microsporum canis) protein is Methylthioribose-1-phosphate isomerase.